Consider the following 353-residue polypeptide: Nucleotide-binding protein sce5766 (353 aa).

27-34 (GLSGAGKS) is a binding site for ATP. 76-79 (DVRV) contributes to the GTP binding site. The segment at 310–353 (SGVPSGVGEGMAGAPGVDLRLAQPGATPSEPRPASDTSVTGGER) is disordered. Residues 344 to 353 (SDTSVTGGER) are compositionally biased toward polar residues.

The protein belongs to the RapZ-like family.

Its function is as follows. Displays ATPase and GTPase activities. This is Nucleotide-binding protein sce5766 from Sorangium cellulosum (strain So ce56) (Polyangium cellulosum (strain So ce56)).